The sequence spans 250 residues: Ubiquinone biosynthesis O-methyltransferase (250 aa).

4 residues coordinate S-adenosyl-L-methionine: arginine 41, glycine 72, aspartate 93, and methionine 136.

This sequence belongs to the methyltransferase superfamily. UbiG/COQ3 family.

It catalyses the reaction a 3-demethylubiquinol + S-adenosyl-L-methionine = a ubiquinol + S-adenosyl-L-homocysteine + H(+). The enzyme catalyses a 3-(all-trans-polyprenyl)benzene-1,2-diol + S-adenosyl-L-methionine = a 2-methoxy-6-(all-trans-polyprenyl)phenol + S-adenosyl-L-homocysteine + H(+). The protein operates within cofactor biosynthesis; ubiquinone biosynthesis. Its function is as follows. O-methyltransferase that catalyzes the 2 O-methylation steps in the ubiquinone biosynthetic pathway. This is Ubiquinone biosynthesis O-methyltransferase from Agrobacterium fabrum (strain C58 / ATCC 33970) (Agrobacterium tumefaciens (strain C58)).